The chain runs to 348 residues: Protein lifeguard 1 (348 aa).

A disordered region spans residues 1–118 (MSHEKSFLVS…GNYQEEGPPS (118 aa)). Pro residues predominate over residues 14 to 41 (YPPPNPGYPVGPQAPMPPYVQPPYPGAP). Residues 42–57 (YPQAAFQPSPYGQPGY) show a composition bias toward low complexity. Residues 82-101 (GPYPQSPFPPNPYGQPPPFQ) show a composition bias toward pro residues. A run of 7 helical transmembrane segments spans residues 142–162 (VFLVLTLQLSVTLSTVAIFTF), 174–194 (VWTYYVSYAIFFISLIVLSCC), 205–225 (LVALSILTISLSYMVGMIASF), 230–250 (AVIMAVGITTAVCFTVVIFSM), 260–280 (MGVLLVSVVVLFIFAILCIFI), 284–304 (ILEIVYASLGALLFTCFLAVD), and 323–343 (FAALNLYTDIINIFLYILTII).

Belongs to the BI1 family. LFG subfamily.

It localises to the membrane. Functionally, potential apoptotic regulator. The protein is Protein lifeguard 1 (Grina) of Rattus norvegicus (Rat).